The chain runs to 103 residues: Small ribosomal subunit protein uS10 (103 aa).

It belongs to the universal ribosomal protein uS10 family. In terms of assembly, part of the 30S ribosomal subunit.

Functionally, involved in the binding of tRNA to the ribosomes. The protein is Small ribosomal subunit protein uS10 of Idiomarina loihiensis (strain ATCC BAA-735 / DSM 15497 / L2-TR).